The chain runs to 239 residues: Ribonuclease PH (239 aa).

Residues Arg86 and 124–126 (GTR) contribute to the phosphate site.

Belongs to the RNase PH family. In terms of assembly, homohexameric ring arranged as a trimer of dimers.

It catalyses the reaction tRNA(n+1) + phosphate = tRNA(n) + a ribonucleoside 5'-diphosphate. Functionally, phosphorolytic 3'-5' exoribonuclease that plays an important role in tRNA 3'-end maturation. Removes nucleotide residues following the 3'-CCA terminus of tRNAs; can also add nucleotides to the ends of RNA molecules by using nucleoside diphosphates as substrates, but this may not be physiologically important. Probably plays a role in initiation of 16S rRNA degradation (leading to ribosome degradation) during starvation. The chain is Ribonuclease PH from Rickettsia akari (strain Hartford).